The chain runs to 376 residues: Chaperone protein DnaJ (376 aa).

In terms of domain architecture, J spans 5-70 (DYYEVLGVAR…QKRAAYDQFG (66 aa)). The CR-type zinc finger occupies 134–212 (GTSVKIKVPT…CHGHGRVEET (79 aa)). C147, C150, C164, C167, C186, C189, C200, and C203 together coordinate Zn(2+). CXXCXGXG motif repeat units lie at residues 147-154 (CTNCGGSG), 164-171 (CNTCGGHG), 186-193 (CPTCRGQG), and 200-207 (CNKCHGHG).

It belongs to the DnaJ family. As to quaternary structure, homodimer. It depends on Zn(2+) as a cofactor.

It localises to the cytoplasm. In terms of biological role, participates actively in the response to hyperosmotic and heat shock by preventing the aggregation of stress-denatured proteins and by disaggregating proteins, also in an autonomous, DnaK-independent fashion. Unfolded proteins bind initially to DnaJ; upon interaction with the DnaJ-bound protein, DnaK hydrolyzes its bound ATP, resulting in the formation of a stable complex. GrpE releases ADP from DnaK; ATP binding to DnaK triggers the release of the substrate protein, thus completing the reaction cycle. Several rounds of ATP-dependent interactions between DnaJ, DnaK and GrpE are required for fully efficient folding. Also involved, together with DnaK and GrpE, in the DNA replication of plasmids through activation of initiation proteins. This chain is Chaperone protein DnaJ, found in Teredinibacter turnerae (strain ATCC 39867 / T7901).